The primary structure comprises 233 residues: Purine nucleoside phosphorylase DeoD-type (233 aa).

H4 serves as a coordination point for a purine D-ribonucleoside. Residues G20, R24, R43, and 87-90 (RIGT) contribute to the phosphate site. Residues 179-181 (EME) and 203-204 (SD) contribute to the a purine D-ribonucleoside site. D204 (proton donor) is an active-site residue.

The protein belongs to the PNP/UDP phosphorylase family. In terms of assembly, homohexamer; trimer of homodimers.

The enzyme catalyses a purine D-ribonucleoside + phosphate = a purine nucleobase + alpha-D-ribose 1-phosphate. It catalyses the reaction a purine 2'-deoxy-D-ribonucleoside + phosphate = a purine nucleobase + 2-deoxy-alpha-D-ribose 1-phosphate. Catalyzes the reversible phosphorolytic breakdown of the N-glycosidic bond in the beta-(deoxy)ribonucleoside molecules, with the formation of the corresponding free purine bases and pentose-1-phosphate. The sequence is that of Purine nucleoside phosphorylase DeoD-type from Helicobacter pylori (strain HPAG1).